Reading from the N-terminus, the 172-residue chain is Neudesin (172 aa).

The N-terminal stretch at 1–31 (MVGPAPRRRLRPLAALALVLALAPGLPTARA) is a signal peptide. One can recognise a Cytochrome b5 heme-binding domain in the interval 44 to 129 (VRLFTEEELA…KELEALDEVF (86 aa)). Lys136 carries the N6-acetyllysine modification. Positions 151-172 (DGSPNLDFKPEDQPHFDIKDEF) are disordered. The segment covering 158–172 (FKPEDQPHFDIKDEF) has biased composition (basic and acidic residues).

This sequence belongs to the cytochrome b5 family. MAPR subfamily. In terms of assembly, interacts with PINK1 and PARK7. As to expression, ubiquitously expressed with high expression in heart. Over-expressed in various tumors including carcinomas of the uterine cervix, lymphoma, colon, lung, skin and leukemia, as well as carcinoma of the breast.

Its subcellular location is the secreted. The protein resides in the extracellular space. It is found in the mitochondrion. The protein localises to the endoplasmic reticulum. Its function is as follows. Acts as a neurotrophic factor in postnatal mature neurons enhancing neuronal survival. Promotes cell proliferation and neurogenesis in undifferentiated neural progenitor cells at the embryonic stage and inhibits differentiation of astrocytes. Its neurotrophic activity is exerted via MAPK1/ERK2, MAPK3/ERK1 and AKT1/AKT pathways. Neurotrophic activity is enhanced by binding to heme. Also acts as an anorexigenic neurotrophic factor that contributes to energy balance. This chain is Neudesin, found in Homo sapiens (Human).